A 258-amino-acid polypeptide reads, in one-letter code: 5'-nucleotidase SurE (258 aa).

Residues Asp18, Asp19, Ser49, and Asn102 each coordinate a divalent metal cation.

This sequence belongs to the SurE nucleotidase family. The cofactor is a divalent metal cation.

It localises to the cytoplasm. It catalyses the reaction a ribonucleoside 5'-phosphate + H2O = a ribonucleoside + phosphate. In terms of biological role, nucleotidase that shows phosphatase activity on nucleoside 5'-monophosphates. The sequence is that of 5'-nucleotidase SurE from Vibrio campbellii (strain ATCC BAA-1116).